The primary structure comprises 164 residues: Ribosome maturation factor RimP (164 aa).

Belongs to the RimP family.

It localises to the cytoplasm. Its function is as follows. Required for maturation of 30S ribosomal subunits. The protein is Ribosome maturation factor RimP of Cellvibrio japonicus (strain Ueda107) (Pseudomonas fluorescens subsp. cellulosa).